The sequence spans 260 residues: 5'-nucleotidase SurE (260 aa).

A divalent metal cation-binding residues include Asp-8, Asp-9, Ser-39, and Asn-91.

It belongs to the SurE nucleotidase family. A divalent metal cation is required as a cofactor.

The protein localises to the cytoplasm. The catalysed reaction is a ribonucleoside 5'-phosphate + H2O = a ribonucleoside + phosphate. Functionally, nucleotidase that shows phosphatase activity on nucleoside 5'-monophosphates. The polypeptide is 5'-nucleotidase SurE (Acidovorax ebreus (strain TPSY) (Diaphorobacter sp. (strain TPSY))).